Reading from the N-terminus, the 203-residue chain is Urease accessory protein UreG (203 aa).

Residue 14–21 (GPVGSGKT) coordinates GTP.

The protein belongs to the SIMIBI class G3E GTPase family. UreG subfamily. As to quaternary structure, homodimer. UreD, UreF and UreG form a complex that acts as a GTP-hydrolysis-dependent molecular chaperone, activating the urease apoprotein by helping to assemble the nickel containing metallocenter of UreC. The UreE protein probably delivers the nickel.

It is found in the cytoplasm. Its function is as follows. Facilitates the functional incorporation of the urease nickel metallocenter. This process requires GTP hydrolysis, probably effectuated by UreG. This is Urease accessory protein UreG from Rhizobium rhizogenes (strain K84 / ATCC BAA-868) (Agrobacterium radiobacter).